A 407-amino-acid chain; its full sequence is Phosphopentomutase (407 aa).

Mn(2+) contacts are provided by aspartate 10, aspartate 306, histidine 311, aspartate 347, histidine 348, and histidine 359.

It belongs to the phosphopentomutase family. Mn(2+) is required as a cofactor.

The protein resides in the cytoplasm. It carries out the reaction 2-deoxy-alpha-D-ribose 1-phosphate = 2-deoxy-D-ribose 5-phosphate. The enzyme catalyses alpha-D-ribose 1-phosphate = D-ribose 5-phosphate. The protein operates within carbohydrate degradation; 2-deoxy-D-ribose 1-phosphate degradation; D-glyceraldehyde 3-phosphate and acetaldehyde from 2-deoxy-alpha-D-ribose 1-phosphate: step 1/2. Its function is as follows. Isomerase that catalyzes the conversion of deoxy-ribose 1-phosphate (dRib-1-P) and ribose 1-phosphate (Rib-1-P) to deoxy-ribose 5-phosphate (dRib-5-P) and ribose 5-phosphate (Rib-5-P), respectively. This Buchnera aphidicola subsp. Acyrthosiphon pisum (strain Tuc7) protein is Phosphopentomutase.